The following is a 398-amino-acid chain: Serine/threonine-protein kinase 32A (398 aa).

Glycine 2 is lipidated: N-myristoyl glycine. Residues 23-281 (FEILRAIGKG…LTDIQNFPYM (259 aa)) form the Protein kinase domain. ATP contacts are provided by residues 29 to 37 (IGKGSFGKV) and lysine 52. The Proton acceptor role is filled by aspartate 146. The tract at residues 379-398 (ALEQTKNNTEEEEDGQNNNL) is disordered. Residues 388–398 (EEEEDGQNNNL) show a composition bias toward acidic residues.

Belongs to the protein kinase superfamily. Ser/Thr protein kinase family. The cofactor is Mg(2+).

The protein resides in the cell membrane. The catalysed reaction is L-seryl-[protein] + ATP = O-phospho-L-seryl-[protein] + ADP + H(+). It catalyses the reaction L-threonyl-[protein] + ATP = O-phospho-L-threonyl-[protein] + ADP + H(+). The chain is Serine/threonine-protein kinase 32A from Mus musculus (Mouse).